A 253-amino-acid polypeptide reads, in one-letter code: Triosephosphate isomerase (253 aa).

9-11 (NWK) lines the substrate pocket. His97 (electrophile) is an active-site residue. Residue Glu169 is the Proton acceptor of the active site. Substrate contacts are provided by residues Gly175, Ser215, and 236-237 (GG).

It belongs to the triosephosphate isomerase family. Homodimer.

It is found in the cytoplasm. It catalyses the reaction D-glyceraldehyde 3-phosphate = dihydroxyacetone phosphate. The protein operates within carbohydrate biosynthesis; gluconeogenesis. Its pathway is carbohydrate degradation; glycolysis; D-glyceraldehyde 3-phosphate from glycerone phosphate: step 1/1. Involved in the gluconeogenesis. Catalyzes stereospecifically the conversion of dihydroxyacetone phosphate (DHAP) to D-glyceraldehyde-3-phosphate (G3P). This is Triosephosphate isomerase from Staphylococcus haemolyticus (strain JCSC1435).